The primary structure comprises 335 residues: Ferrochelatase (335 aa).

2 residues coordinate Fe cation: His-207 and Glu-288.

The protein belongs to the ferrochelatase family.

Its subcellular location is the cytoplasm. The enzyme catalyses heme b + 2 H(+) = protoporphyrin IX + Fe(2+). Its pathway is porphyrin-containing compound metabolism; protoheme biosynthesis; protoheme from protoporphyrin-IX: step 1/1. Catalyzes the ferrous insertion into protoporphyrin IX. The protein is Ferrochelatase of Helicobacter pylori (strain HPAG1).